Consider the following 233-residue polypeptide: MKIGIIGAMEQEVALLRDRIDHSTLCQQAGCEIYMGQLHGVEVALVKSGIGKVSAALGTTLLLDHFKPELVINTGSAGGLAPSLKVGDIVVSHEVRYHDVDVTAFGYEPGQMAQCPASFNAAPSLVALAEESVDRLGMHAVRGLVVSGDAFINDADGLAHIRQTFPQAIAVEMEATAIAHVCHQFAVPFVVVRAISDVADQASHLSFDEFLTVAAQSSSRLVEEMVQALAGQR.

The Proton acceptor role is filled by Glu-12. Substrate is bound by residues Gly-78, Ile-152, and 173-174 (ME). Asp-197 (proton donor) is an active-site residue.

Belongs to the PNP/UDP phosphorylase family. MtnN subfamily. As to quaternary structure, homodimer.

The enzyme catalyses S-adenosyl-L-homocysteine + H2O = S-(5-deoxy-D-ribos-5-yl)-L-homocysteine + adenine. It carries out the reaction S-methyl-5'-thioadenosine + H2O = 5-(methylsulfanyl)-D-ribose + adenine. The catalysed reaction is 5'-deoxyadenosine + H2O = 5-deoxy-D-ribose + adenine. It functions in the pathway amino-acid biosynthesis; L-methionine biosynthesis via salvage pathway; S-methyl-5-thio-alpha-D-ribose 1-phosphate from S-methyl-5'-thioadenosine (hydrolase route): step 1/2. Its function is as follows. Catalyzes the irreversible cleavage of the glycosidic bond in both 5'-methylthioadenosine (MTA) and S-adenosylhomocysteine (SAH/AdoHcy) to adenine and the corresponding thioribose, 5'-methylthioribose and S-ribosylhomocysteine, respectively. Also cleaves 5'-deoxyadenosine, a toxic by-product of radical S-adenosylmethionine (SAM) enzymes, into 5-deoxyribose and adenine. Thus, is required for in vivo function of the radical SAM enzymes biotin synthase and lipoic acid synthase, that are inhibited by 5'-deoxyadenosine accumulation. This chain is 5'-methylthioadenosine/S-adenosylhomocysteine nucleosidase, found in Sodalis glossinidius (strain morsitans).